A 589-amino-acid chain; its full sequence is NADPH-dependent diflavin oxidoreductase 1 (589 aa).

Residues 5-151 enclose the Flavodoxin-like domain; that stretch reads ITILYGSETG…YYIEWEAELI (147 aa). FMN-binding positions include 11 to 16, 60 to 63, 98 to 107, and Glu-133; these read SETGNA, STTG, and VGDSSYVKYN. Residues 202-439 form the FAD-binding FR-type domain; the sequence is DGLKLGTVLE…SIQRSSFKYK (238 aa). Residues Arg-349, 380–383, and 412–415 contribute to the FAD site; these read RMFS and GVCT. NADP(+) contacts are provided by residues Thr-452 and 507-508; that span reads SR. Residue Trp-589 coordinates FAD.

The protein belongs to the NADPH-dependent diflavin oxidoreductase NDOR1 family. This sequence in the N-terminal section; belongs to the flavodoxin family. In the C-terminal section; belongs to the flavoprotein pyridine nucleotide cytochrome reductase family. As to quaternary structure, interacts with DRE2; as part of the cytosolic iron-sulfur (Fe-S) protein assembly (CIA) machinery. Requires FAD as cofactor. It depends on FMN as a cofactor.

Its subcellular location is the cytoplasm. It localises to the mitochondrion. It carries out the reaction 2 oxidized [2Fe-2S]-[protein] + NADPH = 2 reduced [2Fe-2S]-[protein] + NADP(+) + H(+). Functionally, NADPH-dependent reductase which is a central component of the cytosolic iron-sulfur (Fe-S) protein assembly (CIA) machinery. Transfers electrons from NADPH via its FAD and FMN prosthetic groups to the [2Fe-2S] cluster of DRE2, another key component of the CIA machinery. In turn, this reduced cluster provides electrons for assembly of cytosolic iron-sulfur cluster proteins. Positively controls H(2)O(2)-induced cell death. The chain is NADPH-dependent diflavin oxidoreductase 1 from Candida albicans (strain SC5314 / ATCC MYA-2876) (Yeast).